A 722-amino-acid chain; its full sequence is Probable carboxypeptidase X1 (722 aa).

Residues 1 to 20 form the signal peptide; sequence MWGLLLAVTAFAPSVGLGLG. The tract at residues 30–54 is disordered; sequence APGSTLAPHSSVAQPSTKANETSER. Polar residues predominate over residues 36-49; sequence APHSSVAQPSTKAN. 4 N-linked (GlcNAc...) asparagine glycosylation sites follow: N49, N200, N210, and N307. Residues 103–263 enclose the F5/8 type C domain; that stretch reads PGCPPLGLES…PCLRAEILAC (161 aa). A disulfide bridge connects residues C105 and C263. Positions 287 to 610 constitute a Peptidase M14 domain; it reads RHHNYKAMRK…DALLTYLEQV (324 aa). 2 residues coordinate Zn(2+): H349 and E352. N-linked (GlcNAc...) asparagine glycosylation occurs at N461. A Zn(2+)-binding site is contributed by H487. E580 functions as the Proton donor/acceptor in the catalytic mechanism.

It belongs to the peptidase M14 family. It depends on Zn(2+) as a cofactor. Strongly expressed in testis and spleen. Moderately expressed in salivary gland, brain, heart, lung, and kidney. Extremely low expression in liver and muscle. No expression in eye, adrenal, and white adipose tissues.

The protein localises to the secreted. Its function is as follows. May be involved in cell-cell interactions. No carboxypeptidase activity was found yet. The chain is Probable carboxypeptidase X1 (Cpxm1) from Mus musculus (Mouse).